The sequence spans 413 residues: Multifunctional CCA protein (413 aa).

ATP is bound by residues Gly-8 and Arg-11. Residues Gly-8 and Arg-11 each contribute to the CTP site. Mg(2+) is bound by residues Asp-21 and Asp-23. ATP is bound by residues Arg-91, Arg-137, and Arg-140. The CTP site is built by Arg-91, Arg-137, and Arg-140. The 102-residue stretch at 228–329 (TGVHTLMTLS…VKLFDAIDAW (102 aa)) folds into the HD domain.

Belongs to the tRNA nucleotidyltransferase/poly(A) polymerase family. Bacterial CCA-adding enzyme type 1 subfamily. As to quaternary structure, monomer. Can also form homodimers and oligomers. The cofactor is Mg(2+). Requires Ni(2+) as cofactor.

The catalysed reaction is a tRNA precursor + 2 CTP + ATP = a tRNA with a 3' CCA end + 3 diphosphate. It catalyses the reaction a tRNA with a 3' CCA end + 2 CTP + ATP = a tRNA with a 3' CCACCA end + 3 diphosphate. Functionally, catalyzes the addition and repair of the essential 3'-terminal CCA sequence in tRNAs without using a nucleic acid template. Adds these three nucleotides in the order of C, C, and A to the tRNA nucleotide-73, using CTP and ATP as substrates and producing inorganic pyrophosphate. tRNA 3'-terminal CCA addition is required both for tRNA processing and repair. Also involved in tRNA surveillance by mediating tandem CCA addition to generate a CCACCA at the 3' terminus of unstable tRNAs. While stable tRNAs receive only 3'-terminal CCA, unstable tRNAs are marked with CCACCA and rapidly degraded. This Salmonella choleraesuis (strain SC-B67) protein is Multifunctional CCA protein.